The sequence spans 345 residues: Selenide, water dikinase (345 aa).

Cys-16 is an active-site residue. ATP contacts are provided by residues Lys-19 and 46-48 (TSD). Asp-49 is a Mg(2+) binding site. Residues Asp-66, Asp-89, and 136–138 (GHT) each bind ATP. Mg(2+) is bound at residue Asp-89. Residue Asp-224 coordinates Mg(2+).

The protein belongs to the selenophosphate synthase 1 family. Class I subfamily. Homodimer. It depends on Mg(2+) as a cofactor.

The enzyme catalyses hydrogenselenide + ATP + H2O = selenophosphate + AMP + phosphate + 2 H(+). In terms of biological role, synthesizes selenophosphate from selenide and ATP. The sequence is that of Selenide, water dikinase from Clostridium botulinum (strain Alaska E43 / Type E3).